The sequence spans 767 residues: MSIADVEYEYVVLKINGYDISHLSRYEAVQKFLQSKETLVVEIRRQKHNALDLELKHGSNAKISKVDNPGELSVLTDKSAEGTITAASASQQINCPSSTSLKEIETKTPVVLTLRARSHEDRLGSLQAASKETQTQSVVGTDVLKDNDLVNTITDNFIEHEHHLFEQCLEPEIDIEEVTLVKGVEQSSSNQIGLIVTSSGIQQSSTDTNKGDILGNVLEHSEDVFISGVQPESIAYRDGRLRQGDQILRINGLDVKNQEELETQIARSSTSVTLLVSRILYPEDDDDEDIHFEYANTFLPDDYTNVVDKLDKVLLTHVKSLEELSNKSAMQSDECYHIPEKNSSDSNVKISSLAKNIIEQSTKSCSKIKLRPNANLDYKKKFNLPLSQEEVHLQYEYDESEHIYETIPEDSESEPVYCSPYQRSNDKTSIGCSSPIASRPAESLERTMQQQTQRVAQWLGLKPQYQKTRQTLVGRPPPLKLVQQPTCSRVFTLRSTLTNTSASSSSGVAYSSYGQNNVVTGNAAAPGEEVDNSSSAYNTGDSNNSASPHQNTTNPDEAIATGRKLDSTVIDSPNDHLDATGVSTMLLLPFGKSGRIGLCSSNLPTAYVSERYTNVGSENEIHPLKSDIEILRVKPTDDSYSHCPQFNAPNLSSYHFVSSQEVANRCHISTSLQKNATLLNGESAEEIPMVWKVKRRPDGTRYIVKRPVRNRPQVALRKNMRYNEVTTTEDDTISEVKIGRYWTKEERKRHIERAREKRHHQTQQQQQ.

A PDZ domain is found at 202-280 (QQSSTDTNKG…SVTLLVSRIL (79 aa)). Disordered regions lie at residues 521–557 (GNAAAPGEEVDNSSSAYNTGDSNNSASPHQNTTNPDE) and 744–767 (KEERKRHIERAREKRHHQTQQQQQ). A compositionally biased stretch (polar residues) spans 532–555 (NSSSAYNTGDSNNSASPHQNTTNP). Residues 744-755 (KEERKRHIERAR) are compositionally biased toward basic and acidic residues.

As to quaternary structure, interacts with Slo. As to expression, in embryos, it is expressed throughout the CNS and in several peripheral locations. Colocalizes with Slo.

Functionally, may selectively reduce calcium-activated potassium channel (Slo) currents by reducing the number of Slo channels in the plasma membrane. This Drosophila melanogaster (Fruit fly) protein is Slo-interacting protein 1 (Slip1).